Here is a 452-residue protein sequence, read N- to C-terminus: tRNA pseudouridine synthase Pus10 (452 aa).

The region spanning 71-200 (EMLRALAPSC…DGHVEIQIQP (130 aa)) is the THUMP domain. Residue D269 is the Nucleophile of the active site. The substrate site is built by Y335 and Y406.

This sequence belongs to the pseudouridine synthase Pus10 family.

It catalyses the reaction uridine(54) in tRNA = pseudouridine(54) in tRNA. The catalysed reaction is uridine(55) in tRNA = pseudouridine(55) in tRNA. Functionally, responsible for synthesis of pseudouridine from uracil-54 and uracil-55 in the psi GC loop of transfer RNAs. The chain is tRNA pseudouridine synthase Pus10 from Methanothrix thermoacetophila (strain DSM 6194 / JCM 14653 / NBRC 101360 / PT) (Methanosaeta thermophila).